A 50-amino-acid chain; its full sequence is Apoptotic protease-activating factor 1 (50 aa).

A CARD domain is found at 1 to 31; it reads ILKKDNYSYISFYNALIHEGYKDLAALLHSG. The NB-ARC domain occupies 46–50; the sequence is GGITS.

As to quaternary structure, monomer. Oligomerizes to a heptameric ring, known as the apoptosome, upon binding of cytochrome c and dATP. Oligomeric Apaf-1 and pro-caspase-9 bind to each other via their respective NH2-terminal CARD domains and consecutively mature caspase-9 is released from the complex. Interacts with APIP. Interacts (via CARD and NACHT domains) with NAIP/BIRC1 (via NACHT domain). Interacts with CIAO2A.

Oligomeric Apaf-1 mediates the cytochrome c-dependent autocatalytic activation of pro-caspase 9 (Apaf-3), leading to the activation of caspase-3 and apoptosis. This activation requires ATP. This is Apoptotic protease-activating factor 1 (APAF1) from Canis lupus familiaris (Dog).